Reading from the N-terminus, the 120-residue chain is uncharacterized protein (120 aa).

Residues 70 to 109 (CARCRRSLTLTPAVSCLPCGHSCLCTDCDQLFANVCFECK) form an RING-type zinc finger.

This is an uncharacterized protein from Orgyia pseudotsugata multicapsid polyhedrosis virus (OpMNPV).